Reading from the N-terminus, the 259-residue chain is Probable UMP-CMP kinase 2 (259 aa).

Gly-63–Thr-68 is a binding site for ATP. An NMP region spans residues Ser-83–Val-112. A ribonucleoside 5'-phosphate contacts are provided by residues Arg-89, Lys-110–Val-112, and Gly-137–Arg-140. Asn-144 is a binding site for CMP. Residues Asn-175–Asp-183 are LID. Arg-176 contributes to the ATP binding site. A ribonucleoside 5'-phosphate is bound by residues Arg-180 and Arg-191. Gly-219 contacts ATP.

Belongs to the adenylate kinase family. UMP-CMP kinase subfamily. Monomer. It depends on Mg(2+) as a cofactor.

Its subcellular location is the cytoplasm. It is found in the nucleus. The catalysed reaction is CMP + ATP = CDP + ADP. The enzyme catalyses dCMP + ATP = dCDP + ADP. It carries out the reaction UMP + ATP = UDP + ADP. Functionally, catalyzes the phosphorylation of pyrimidine nucleoside monophosphates at the expense of ATP. Plays an important role in de novo pyrimidine nucleotide biosynthesis. Has preference for UMP and CMP as phosphate acceptors. This Arabidopsis thaliana (Mouse-ear cress) protein is Probable UMP-CMP kinase 2 (UMK2).